A 395-amino-acid polypeptide reads, in one-letter code: Elongation factor Tu (395 aa).

The tr-type G domain occupies 10–204 (KPHVNIGTIG…AVDSYIPTPQ (195 aa)). Residues 19–26 (GHVDHGKT) are G1. Residue 19–26 (GHVDHGKT) coordinates GTP. Thr26 serves as a coordination point for Mg(2+). Residues 60–64 (GITIN) are G2. A G3 region spans residues 81–84 (DCPG). Residues 81 to 85 (DCPGH) and 136 to 139 (NKCD) each bind GTP. The G4 stretch occupies residues 136–139 (NKCD). Residues 174–176 (SAL) are G5.

The protein belongs to the TRAFAC class translation factor GTPase superfamily. Classic translation factor GTPase family. EF-Tu/EF-1A subfamily. As to quaternary structure, monomer.

The protein localises to the cytoplasm. It carries out the reaction GTP + H2O = GDP + phosphate + H(+). In terms of biological role, GTP hydrolase that promotes the GTP-dependent binding of aminoacyl-tRNA to the A-site of ribosomes during protein biosynthesis. This chain is Elongation factor Tu, found in Symbiobacterium thermophilum (strain DSM 24528 / JCM 14929 / IAM 14863 / T).